A 202-amino-acid chain; its full sequence is Probable chemoreceptor glutamine deamidase CheD (202 aa).

The protein belongs to the CheD family.

It catalyses the reaction L-glutaminyl-[protein] + H2O = L-glutamyl-[protein] + NH4(+). In terms of biological role, probably deamidates glutamine residues to glutamate on methyl-accepting chemotaxis receptors (MCPs), playing an important role in chemotaxis. This is Probable chemoreceptor glutamine deamidase CheD from Thiobacillus denitrificans (strain ATCC 25259 / T1).